The following is a 313-amino-acid chain: Ketimine reductase mu-crystallin (313 aa).

Residue Arg47 coordinates 3,3',5-triiodo-L-thyronine. NADPH is bound by residues Ser90, His91, Arg118, Ala143, Val145, Gln146, Asn167, Arg168, Thr169, Asn172, Thr204, Met205, and Val225. Position 256 (Glu256) interacts with 3,3',5-triiodo-L-thyronine. Position 291 (Ser291) interacts with NADPH.

It belongs to the ornithine cyclodeaminase/mu-crystallin family. In terms of assembly, homodimer. Binds the thyroid hormone triiodothyronine (T3); T3 binding inhibits enzymatic activity. As to expression, expressed in the spiral ligament of the cochlea (at protein level).

The protein localises to the cytoplasm. It carries out the reaction L-pipecolate + NADP(+) = Delta(1)-piperideine-2-carboxylate + NADPH + H(+). The enzyme catalyses L-pipecolate + NAD(+) = Delta(1)-piperideine-2-carboxylate + NADH + H(+). It catalyses the reaction L-proline + NADP(+) = 1-pyrroline-2-carboxylate + NADPH + H(+). The catalysed reaction is L-proline + NAD(+) = 1-pyrroline-2-carboxylate + NADH + H(+). It carries out the reaction (3R)-1,4-thiomorpholine-3-carboxylate + NAD(+) = 3,4-dehydrothiomorpholine-3-carboxylate + NADH + 2 H(+). The enzyme catalyses (3R)-1,4-thiomorpholine-3-carboxylate + NADP(+) = 3,4-dehydrothiomorpholine-3-carboxylate + NADPH + 2 H(+). It catalyses the reaction (S)-cystathionine ketimine + NADH + 2 H(+) = (3R,5S)-2,3,5,6,7-pentahydro-1,4-thiazepine-3,5-dicarboxylate + NAD(+). The catalysed reaction is (S)-cystathionine ketimine + NADPH + 2 H(+) = (3R,5S)-2,3,5,6,7-pentahydro-1,4-thiazepine-3,5-dicarboxylate + NADP(+). It carries out the reaction (R)-lanthionine ketimine + NADPH + 2 H(+) = (3R,5R)-1,4-thiomorpholine-3,5-dicarboxylate + NADP(+). The enzyme catalyses Delta(2)-thiazoline-2-carboxylate + NADPH + 2 H(+) = L-thiazolidine-2-carboxylate + NADP(+). Functionally, catalyzes the NAD(P)H-dependent reduction of imine double bonds of a number of cyclic ketimine substrates, including sulfur-containing cyclic ketimines. Under physiological conditions, it efficiently catalyzes delta(1)-piperideine-2-carboxylate (P2C) and delta(1)-pyrroline-2-carboxylate (Pyr2C) reduction, suggesting a central role in lysine and glutamate metabolism. Additional substrates are delta(2)-thiazoline-2-carboxylate (T2C), 3,4-dehydrothiomorpholine-3-carboxylate (AECK), and (R)-lanthionine ketimine (LK) that is reduced at very low rate compared to other substrates. Also catalyzes the NAD(P)H-dependent reduction of (S)-cystathionine ketimine (CysK). In Mus musculus (Mouse), this protein is Ketimine reductase mu-crystallin.